A 270-amino-acid chain; its full sequence is uncharacterized protein (270 aa).

A disordered region spans residues 235–270; the sequence is LADSDLEADSDDSESFEFVENPEPSENGSEPTIKND. A compositionally biased stretch (acidic residues) spans 238–251; sequence SDLEADSDDSESFE. Over residues 255–270 the composition is skewed to low complexity; sequence NPEPSENGSEPTIKND.

This is an uncharacterized protein from Halorubrum sp. PV6 (HRPV-1).